Reading from the N-terminus, the 65-residue chain is Large ribosomal subunit protein bL35 (65 aa).

The interval 1–25 (MPKLKTKSSAAKRFKKTGKGGFKHR) is disordered.

This sequence belongs to the bacterial ribosomal protein bL35 family.

The chain is Large ribosomal subunit protein bL35 from Francisella tularensis subsp. holarctica (strain FTNF002-00 / FTA).